A 484-amino-acid polypeptide reads, in one-letter code: Poly(A) RNA polymerase GLD2 (484 aa).

Residues Ser62 and Ser69 each carry the phosphoserine modification. The short motif at 76–92 is the Nuclear localization signal element; the sequence is KRISDEKAFPLDGKRQR. Ser95 carries the post-translational modification Phosphoserine. Mg(2+) is bound by residues Asp213 and Asp215. Positions 386–440 constitute a PAP-associated domain; that stretch reads SLGDLLLGFLKYYATEFDWNTQMISVREAKAIPRPDDMEWRNKYICVEEPFDGTN.

This sequence belongs to the DNA polymerase type-B-like family. GLD2 subfamily. Interacts with CPEB1, CPEB2, CPSF1 and PABPC1. Interacts with QKI isoform QKI7; promoting recruitment to miRNA miR-122 and miR-122 stabilization. Requires Mg(2+) as cofactor. Mn(2+) is required as a cofactor. Ubiquitous. In brain, it is highly expressed in the cerebral cortex, cerebellum, hippocampus and olfactory bulb.

The protein localises to the cytoplasm. It localises to the nucleus. The catalysed reaction is RNA(n) + ATP = RNA(n)-3'-adenine ribonucleotide + diphosphate. Its function is as follows. Cytoplasmic poly(A) RNA polymerase that adds successive AMP monomers to the 3'-end of specific RNAs, forming a poly(A) tail. In contrast to the canonical nuclear poly(A) RNA polymerase, it only adds poly(A) to selected cytoplasmic mRNAs. Does not play a role in replication-dependent histone mRNA degradation. Adds a single nucleotide to the 3' end of specific miRNAs, monoadenylation stabilizes and prolongs the activity of some but not all miRNAs. In Mus musculus (Mouse), this protein is Poly(A) RNA polymerase GLD2 (Tent2).